Reading from the N-terminus, the 290-residue chain is uncharacterized protein (290 aa).

This sequence belongs to the UreD family.

It localises to the cytoplasm. Its subcellular location is the nucleus. Functionally, probably facilitates nickel incorporation. This is an uncharacterized protein from Schizosaccharomyces pombe (strain 972 / ATCC 24843) (Fission yeast).